The sequence spans 98 residues: NADH-ubiquinone oxidoreductase chain 4L (98 aa).

The next 3 membrane-spanning stretches (helical) occupy residues 1–21, 29–49, and 61–81; these read MPSIYVNIFLAFIFALLGMLI, SLLCLEGMMLSLFILITLTAL, and IVLLVFAACEAAIGLALLVMV.

The protein belongs to the complex I subunit 4L family. As to quaternary structure, core subunit of respiratory chain NADH dehydrogenase (Complex I) which is composed of 45 different subunits.

Its subcellular location is the mitochondrion inner membrane. The catalysed reaction is a ubiquinone + NADH + 5 H(+)(in) = a ubiquinol + NAD(+) + 4 H(+)(out). In terms of biological role, core subunit of the mitochondrial membrane respiratory chain NADH dehydrogenase (Complex I) which catalyzes electron transfer from NADH through the respiratory chain, using ubiquinone as an electron acceptor. Part of the enzyme membrane arm which is embedded in the lipid bilayer and involved in proton translocation. The chain is NADH-ubiquinone oxidoreductase chain 4L (MT-ND4L) from Lepus europaeus (European hare).